Here is a 1037-residue protein sequence, read N- to C-terminus: Multidrug resistance protein MdtF (1037 aa).

Over 1 to 9 the chain is Cytoplasmic; the sequence is MANYFIDRP. A helical transmembrane segment spans residues 10-30; that stretch reads VFAWVLAIIMMLAGGLAIMNL. The Periplasmic segment spans residues 31-338; it reads PVAQYPQIAP…TTPFIEISIQ (308 aa). A helical membrane pass occupies residues 339-359; it reads EVFKTLVEAIILVFLVMYLFL. At 360-369 the chain is on the cytoplasmic side; it reads QNFRATIIPT. Residues 370–390 traverse the membrane as a helical segment; it reads IAVPVVILGTFAILSAVGFTI. Topologically, residues 391–392 are periplasmic; the sequence is NT. The helical transmembrane segment at 393–413 threads the bilayer; the sequence is LTMFGMVLAIGLLVDDAIVVV. Over 414–441 the chain is Cytoplasmic; it reads ENVERVIAEDKLPPKEATHKSMGQIQRA. Residues 442–462 traverse the membrane as a helical segment; that stretch reads LVGIAVVLSAVFMPMAFMSGA. The Periplasmic portion of the chain corresponds to 463–471; it reads TGEIYRQFS. Residues 472–492 form a helical membrane-spanning segment; it reads ITLISSMLLSVFVAMSLTPAL. The Cytoplasmic segment spans residues 493 to 534; the sequence is CATILKAAPEGGHKPNALFARFNTLFEKSTQHYTDSTRSLLR. The chain crosses the membrane as a helical span at residues 535-555; the sequence is CTGRYMVIYLLICAGMAVLFL. The Periplasmic segment spans residues 556 to 870; that stretch reads RTPTSFLPEE…SYQEALSSNQ (315 aa). Residues 871 to 891 traverse the membrane as a helical segment; the sequence is APALYAISLVVVFLALAALYE. Ser892 is a topological domain (cytoplasmic). A helical membrane pass occupies residues 893–913; that stretch reads WSIPFSVMLVVPLGVVGALLA. Over 914–927 the chain is Periplasmic; that stretch reads TDLRGLSNDVYFQV. A helical transmembrane segment spans residues 928-948; sequence GLLTTIGLSAKNAILIVEFAV. Topologically, residues 949-972 are cytoplasmic; it reads EMMQKEGKTPIEAIIEAARMRLRP. A helical membrane pass occupies residues 973–993; the sequence is ILMTSLAFILGVLPLVISHGA. The Periplasmic portion of the chain corresponds to 994-1006; the sequence is GSGAQNAVGTGVM. Residues 1007 to 1027 traverse the membrane as a helical segment; the sequence is GGMFAATVLAIYFVPVFFVVV. Topologically, residues 1028–1037 are cytoplasmic; that stretch reads EHLFARFKKA.

This sequence belongs to the resistance-nodulation-cell division (RND) (TC 2.A.6) family. In terms of assembly, homotrimer. Part of the tripartite efflux system MdtEF-TolC, which is composed of an inner membrane transporter, MdtF, a membrane fusion protein, MdtE, and an outer membrane component, TolC. The complex forms a large protein conduit and can translocate molecules across both the inner and outer membranes.

It is found in the cell inner membrane. Part of the tripartite efflux system MdtEF-TolC, which confers resistance to various compounds. The protein is Multidrug resistance protein MdtF (mdtF) of Escherichia coli O157:H7.